We begin with the raw amino-acid sequence, 232 residues long: Large ribosomal subunit protein uL1 (232 aa).

Belongs to the universal ribosomal protein uL1 family. As to quaternary structure, part of the 50S ribosomal subunit.

Functionally, binds directly to 23S rRNA. The L1 stalk is quite mobile in the ribosome, and is involved in E site tRNA release. Protein L1 is also a translational repressor protein, it controls the translation of the L11 operon by binding to its mRNA. In Cereibacter sphaeroides (strain ATCC 17025 / ATH 2.4.3) (Rhodobacter sphaeroides), this protein is Large ribosomal subunit protein uL1.